The primary structure comprises 276 residues: Ribonuclease 3 (276 aa).

The segment at 1–29 is disordered; it reads MRGTVSVPKKAEDAKADPPAKKKADTQAS. Residues 9 to 25 are compositionally biased toward basic and acidic residues; that stretch reads KKAEDAKADPPAKKKAD. Residues 31-157 enclose the RNase III domain; that stretch reads HTLLEGRLGY…VIGAVYLDQG (127 aa). Position 70 (Glu-70) interacts with Mg(2+). Asp-74 is a catalytic residue. Mg(2+) contacts are provided by Asp-143 and Glu-146. Glu-146 is an active-site residue. Residues 184–252 enclose the DRBM domain; it reads DWKTSLQELT…AESAWRSIRA (69 aa). The segment at 227-276 is disordered; the sequence is YGTGTGRSKKEAEQQAAESAWRSIRAAADERAKATADAVDADPDEASASA. Residues 265–276 are compositionally biased toward acidic residues; sequence VDADPDEASASA.

The protein belongs to the ribonuclease III family. As to quaternary structure, homodimer. It depends on Mg(2+) as a cofactor.

Its subcellular location is the cytoplasm. It catalyses the reaction Endonucleolytic cleavage to 5'-phosphomonoester.. In terms of biological role, digests double-stranded RNA. Involved in the processing of primary rRNA transcript to yield the immediate precursors to the large and small rRNAs (23S and 16S). Also processes some mRNAs, and tRNAs when they are encoded in the rRNA operon. May modulate key aspects of gene expression as its absence has extensive effects on the abundance of about 200 different transcripts. Probably processes pre-crRNA and tracrRNA of type II CRISPR loci if present in the organism. The chain is Ribonuclease 3 (rnc) from Streptomyces coelicolor (strain ATCC BAA-471 / A3(2) / M145).